Here is a 129-residue protein sequence, read N- to C-terminus: Small ribosomal subunit protein uS11 (129 aa).

Belongs to the universal ribosomal protein uS11 family. In terms of assembly, part of the 30S ribosomal subunit. Interacts with proteins S7 and S18. Binds to IF-3.

Functionally, located on the platform of the 30S subunit, it bridges several disparate RNA helices of the 16S rRNA. Forms part of the Shine-Dalgarno cleft in the 70S ribosome. This is Small ribosomal subunit protein uS11 from Sphingopyxis alaskensis (strain DSM 13593 / LMG 18877 / RB2256) (Sphingomonas alaskensis).